A 386-amino-acid chain; its full sequence is Putative aminotransferase YugH (386 aa).

Lys234 carries the post-translational modification N6-(pyridoxal phosphate)lysine.

The protein belongs to the class-I pyridoxal-phosphate-dependent aminotransferase family. Pyridoxal 5'-phosphate is required as a cofactor.

Its subcellular location is the cytoplasm. The chain is Putative aminotransferase YugH (yugH) from Bacillus subtilis (strain 168).